Consider the following 320-residue polypeptide: Cytochrome f (320 aa).

The N-terminal stretch at 1–35 is a signal peptide; it reads MENRKTFSWLKEQMIRSISVSIMIYVITRTSISNA. 4 residues coordinate heme: Tyr36, Cys56, Cys59, and His60. Residues 286-306 traverse the membrane as a helical segment; it reads VQGLLFFFASVILAQVFLVLK.

The protein belongs to the cytochrome f family. The 4 large subunits of the cytochrome b6-f complex are cytochrome b6, subunit IV (17 kDa polypeptide, petD), cytochrome f and the Rieske protein, while the 4 small subunits are PetG, PetL, PetM and PetN. The complex functions as a dimer. Heme is required as a cofactor.

Its subcellular location is the plastid. It localises to the chloroplast thylakoid membrane. Functionally, component of the cytochrome b6-f complex, which mediates electron transfer between photosystem II (PSII) and photosystem I (PSI), cyclic electron flow around PSI, and state transitions. The sequence is that of Cytochrome f from Saccharum hybrid (Sugarcane).